The following is a 445-amino-acid chain: MSNRKYFGTDGIRGRVGDAPITPDFVLKLGWAAGKVLARHGSRKIIIGKDTRISGYMLESALEAGLAAAGLSALFTGPMPTPAVAYLTRTFRAEAGIVISASHNPFYDNGIKFFSIDGTKLPDAVEEAIEAEMEKEISCVDSAELGKASRIVDAAGRYIEFCKATFPNELSLSELKIVVDCANGATYHIAPNVLRELGANVIAIGCEPNGVNINAEVGATDVRALQARVLAEKADLGIAFDGDGDRVIMVDHEGNKVDGDQIMYIIAREGLRQGQLRGGAVGTLMSNMGLELALKQLGIPFARAKVGDRYVLEKMQEKGWRIGAENSGHVILLDKTTTGDGIVAGLQVLAAMARNHMSLHDLCSGMKMFPQILVNVRYTAGSGDPLEHESVKAVTAEVETALGSRGRVLLRKSGTEPLIRVMVEGEDEAQVTEFAHRIADAVKAV.

The active-site Phosphoserine intermediate is S102. Mg(2+)-binding residues include S102, D241, D243, and D245. S102 is modified (phosphoserine).

It belongs to the phosphohexose mutase family. Requires Mg(2+) as cofactor. Post-translationally, activated by phosphorylation.

It carries out the reaction alpha-D-glucosamine 1-phosphate = D-glucosamine 6-phosphate. Catalyzes the conversion of glucosamine-6-phosphate to glucosamine-1-phosphate. The sequence is that of Phosphoglucosamine mutase from Escherichia coli O157:H7.